The sequence spans 242 residues: Tropomyosin-1 (242 aa).

2 disordered regions span residues 1-31 and 65-96; these read MDAIKKKMSAMKTKLEEADKQAQDAEDELTA and TSLTEKYNEEEKKAEEGRRAHKELENRGQTDY. A coiled-coil region spans residues 1–242; sequence MDAIKKKMSA…DELLLELASM (242 aa). 2 stretches are compositionally biased toward basic and acidic residues: residues 13 to 23 and 70 to 96; these read TKLEEADKQAQ and KYNEEEKKAEEGRRAHKELENRGQTDY.

This sequence belongs to the tropomyosin family. In terms of assembly, homodimer. In terms of tissue distribution, expressed ubiquitously.

The chain is Tropomyosin-1 (TPM1) from Podocoryna carnea (Hydrozoan).